The following is a 316-amino-acid chain: Mycothiol acetyltransferase (316 aa).

N-acetyltransferase domains are found at residues 16-153 (REVR…VPAV) and 156-316 (VRIR…PAAN). E36 contributes to the 1D-myo-inositol 2-(L-cysteinylamino)-2-deoxy-alpha-D-glucopyranoside binding site. Acetyl-CoA is bound by residues 83–85 (LVV) and 91–96 (RRGIGS). 3 residues coordinate 1D-myo-inositol 2-(L-cysteinylamino)-2-deoxy-alpha-D-glucopyranoside: E183, K228, and E238. Acetyl-CoA-binding positions include 242–244 (VGV) and 249–255 (QGRGLGQ). Y283 provides a ligand contact to 1D-myo-inositol 2-(L-cysteinylamino)-2-deoxy-alpha-D-glucopyranoside. 288-293 (NVAAVR) contributes to the acetyl-CoA binding site.

It belongs to the acetyltransferase family. MshD subfamily. As to quaternary structure, monomer.

It carries out the reaction 1D-myo-inositol 2-(L-cysteinylamino)-2-deoxy-alpha-D-glucopyranoside + acetyl-CoA = mycothiol + CoA + H(+). Functionally, catalyzes the transfer of acetyl from acetyl-CoA to desacetylmycothiol (Cys-GlcN-Ins) to form mycothiol. This is Mycothiol acetyltransferase from Mycobacterium avium (strain 104).